We begin with the raw amino-acid sequence, 676 residues long: Protein timeless (676 aa).

Residues 77–108 form a necessary for normal circadian rhythm region; that stretch reads VNTLQKLLNLWFEASLSESSEDNESNTSPPKK. Disordered regions lie at residues 94–145 and 346–398; these read ESSE…CDER and PESI…LVKR. 2 stretches are compositionally biased toward low complexity: residues 101-129 and 360-369; these read SNTS…SDNG and QGKPQHQKPP. A Nuclear localization signal motif is present at residues 388-398; it reads KELRRKKLVKR.

Belongs to the timeless family. Forms a heterodimer with period (PER); the complex then translocates into the nucleus. In terms of processing, phosphorylated with a circadian rhythmicity.

The protein resides in the nucleus. The protein localises to the cytoplasm. It localises to the perinuclear region. In terms of biological role, required for the production of circadian rhythms. The biological cycle depends on the rhythmic formation and nuclear localization of the TIM-PER complex. Light induces the degradation of TIM, which promotes elimination of PER. Nuclear activity of the heterodimer coordinatively regulates PER and TIM transcription through a negative feedback loop. Behaves as a negative element in circadian transcriptional loop. Does not appear to bind DNA, suggesting indirect transcriptional inhibition. The polypeptide is Protein timeless (tim) (Drosophila hydei (Fruit fly)).